The chain runs to 647 residues: Threonine--tRNA ligase (647 aa).

Residues 1-61 (MIKITFPDGA…EEDGSIEIVT (61 aa)) enclose the TGS domain. The interval 240-538 (DHRKLGKELD…LIETYKGAFP (299 aa)) is catalytic. Residues Cys334, His385, and His515 each coordinate Zn(2+).

The protein belongs to the class-II aminoacyl-tRNA synthetase family. In terms of assembly, homodimer. The cofactor is Zn(2+).

It localises to the cytoplasm. It catalyses the reaction tRNA(Thr) + L-threonine + ATP = L-threonyl-tRNA(Thr) + AMP + diphosphate + H(+). Its function is as follows. Catalyzes the attachment of threonine to tRNA(Thr) in a two-step reaction: L-threonine is first activated by ATP to form Thr-AMP and then transferred to the acceptor end of tRNA(Thr). Also edits incorrectly charged L-seryl-tRNA(Thr). The polypeptide is Threonine--tRNA ligase (Streptococcus agalactiae serotype III (strain NEM316)).